A 57-amino-acid polypeptide reads, in one-letter code: Large ribosomal subunit protein bL32A (57 aa).

This sequence belongs to the bacterial ribosomal protein bL32 family.

The sequence is that of Large ribosomal subunit protein bL32A (rpmF1) from Streptomyces coelicolor (strain ATCC BAA-471 / A3(2) / M145).